An 837-amino-acid chain; its full sequence is V-type proton ATPase 116 kDa subunit a 1 (837 aa).

The Cytoplasmic segment spans residues 1–388 (MGELFRSEEM…DAYGIGTYRE (388 aa)). Residues Thr-250 and Thr-360 each carry the phosphothreonine modification. At Tyr-364 the chain carries Phosphotyrosine. Residues 389–407 (INPAPYTIITFPFLFAVMF) traverse the membrane as a helical segment. Residues 408–409 (GD) lie on the Vacuolar side of the membrane. A helical membrane pass occupies residues 410–426 (FGHGILMTLFAVWMVLR). Over 427–441 (ESRILSQKNENEMFS) the chain is Cytoplasmic. The helical transmembrane segment at 442-471 (TVFSGRYIILLMGVFSMYTGLIYNDCFSKS) threads the bilayer. The Vacuolar portion of the chain corresponds to 472–534 (LNIFGSSWSV…ATNKLTFLNS (63 aa)). A glycan (N-linked (GalNAc...) asparagine) is linked at Asn-488. The helical transmembrane segment at 535-554 (FKMKMSVILGIIHMLFGVSL) threads the bilayer. Over 555 to 572 (SLFNHIYFKKPLNIYFGF) the chain is Cytoplasmic. A helical membrane pass occupies residues 573-593 (IPEIIFMTSLFGYLVILIFYK). The Vacuolar segment spans residues 594–638 (WTAYDAHTSENAPSLLIHFINMFLFSYPESGYSMLYSGQKGIQCF). A helical transmembrane segment spans residues 639–658 (LVVVALLCVPWMLLFKPLVL). Topologically, residues 659–724 (RRQYLRRKHL…DTMVHQAIHT (66 aa)) are cytoplasmic. A helical transmembrane segment spans residues 725–749 (IEYCLGCISNTASYLRLWALSLAHA). Over 750–770 (QLSEVLWTMVIHIGLSVKSLA) the chain is Vacuolar. A helical transmembrane segment spans residues 771 to 809 (GGLVLFFFFTAFATLTVAILLIMEGLSAFLHALRLHWVE). Residues 810–837 (FQNKFYSGTGFKFLPFSFEHIREGKFEE) are Cytoplasmic-facing.

It belongs to the V-ATPase 116 kDa subunit family. V-ATPase is a heteromultimeric enzyme made up of two complexes: the ATP-hydrolytic V1 complex and the proton translocation V0 complex. The V1 complex consists of three catalytic AB heterodimers that form a heterohexamer, three peripheral stalks each consisting of EG heterodimers, one central rotor including subunits D and F, and the regulatory subunits C and H. The proton translocation complex V0 consists of the proton transport subunit a, a ring of proteolipid subunits c9c'', rotary subunit d, subunits e and f, and the accessory subunits ATP6AP1/Ac45 and ATP6AP2/PRR. Interacts with SPAAR.

It localises to the cytoplasmic vesicle. The protein resides in the clathrin-coated vesicle membrane. It is found in the secretory vesicle. The protein localises to the synaptic vesicle membrane. Its subcellular location is the melanosome. In terms of biological role, subunit of the V0 complex of vacuolar(H+)-ATPase (V-ATPase), a multisubunit enzyme composed of a peripheral complex (V1) that hydrolyzes ATP and a membrane integral complex (V0) that transports protons across cellular membranes. V-ATPase is responsible for the acidification of various organelles, such as lysosomes, endosomes, the trans-Golgi network, and secretory granules, including synaptic vesicles. In certain cell types, can be exported to the plasma membrane, where it is involved in the acidification of the extracellular environment. Required for assembly and activity of the vacuolar ATPase. Through its action on compartment acidification, plays an essential role in neuronal development in terms of integrity and connectivity of neurons. The polypeptide is V-type proton ATPase 116 kDa subunit a 1 (ATP6V0A1) (Homo sapiens (Human)).